Consider the following 504-residue polypeptide: Glucose-6-phosphate isomerase (504 aa).

Glu-333 functions as the Proton donor in the catalytic mechanism. Active-site residues include His-364 and Lys-473.

This sequence belongs to the GPI family.

It localises to the cytoplasm. The catalysed reaction is alpha-D-glucose 6-phosphate = beta-D-fructose 6-phosphate. Its pathway is carbohydrate biosynthesis; gluconeogenesis. It participates in carbohydrate degradation; glycolysis; D-glyceraldehyde 3-phosphate and glycerone phosphate from D-glucose: step 2/4. Functionally, catalyzes the reversible isomerization of glucose-6-phosphate to fructose-6-phosphate. This chain is Glucose-6-phosphate isomerase, found in Xanthomonas axonopodis pv. citri (strain 306).